The primary structure comprises 318 residues: NADH-ubiquinone oxidoreductase chain 1 (318 aa).

The next 8 membrane-spanning stretches (helical) occupy residues 2–22 (FMVN…FLTL), 76–96 (TLAL…HPLI), 98–118 (FNLG…SILW), 140–160 (ISYE…SGSF), 171–191 (HSWL…STLA), 217–237 (AGSF…MNAL), 253–273 (ELYT…FLWI), and 294–314 (LPLT…TSGI).

It belongs to the complex I subunit 1 family. Core subunit of respiratory chain NADH dehydrogenase (Complex I) which is composed of 45 different subunits.

It is found in the mitochondrion inner membrane. The catalysed reaction is a ubiquinone + NADH + 5 H(+)(in) = a ubiquinol + NAD(+) + 4 H(+)(out). In terms of biological role, core subunit of the mitochondrial membrane respiratory chain NADH dehydrogenase (Complex I) which catalyzes electron transfer from NADH through the respiratory chain, using ubiquinone as an electron acceptor. Essential for the catalytic activity and assembly of complex I. The sequence is that of NADH-ubiquinone oxidoreductase chain 1 (MT-ND1) from Ateles paniscus (Black spider monkey).